Consider the following 208-residue polypeptide: ATP-dependent Clp protease proteolytic subunit (208 aa).

The Nucleophile role is filled by Ser105. His130 is a catalytic residue.

The protein belongs to the peptidase S14 family. In terms of assembly, fourteen ClpP subunits assemble into 2 heptameric rings which stack back to back to give a disk-like structure with a central cavity, resembling the structure of eukaryotic proteasomes.

It localises to the cytoplasm. It catalyses the reaction Hydrolysis of proteins to small peptides in the presence of ATP and magnesium. alpha-casein is the usual test substrate. In the absence of ATP, only oligopeptides shorter than five residues are hydrolyzed (such as succinyl-Leu-Tyr-|-NHMec, and Leu-Tyr-Leu-|-Tyr-Trp, in which cleavage of the -Tyr-|-Leu- and -Tyr-|-Trp bonds also occurs).. Its function is as follows. Cleaves peptides in various proteins in a process that requires ATP hydrolysis. Has a chymotrypsin-like activity. Plays a major role in the degradation of misfolded proteins. The protein is ATP-dependent Clp protease proteolytic subunit of Xanthomonas campestris pv. campestris (strain 8004).